A 410-amino-acid chain; its full sequence is Peptidase T (410 aa).

His-79 provides a ligand contact to Zn(2+). Asp-81 is an active-site residue. Residue Asp-142 coordinates Zn(2+). Glu-176 (proton acceptor) is an active-site residue. Residues Glu-177, Asp-199, and His-381 each contribute to the Zn(2+) site.

It belongs to the peptidase M20B family. It depends on Zn(2+) as a cofactor.

Its subcellular location is the cytoplasm. It catalyses the reaction Release of the N-terminal residue from a tripeptide.. Cleaves the N-terminal amino acid of tripeptides. This Bacillus thuringiensis subsp. konkukian (strain 97-27) protein is Peptidase T.